The sequence spans 150 residues: 3-hydroxyacyl-[acyl-carrier-protein] dehydratase FabZ (150 aa).

Residue H51 is part of the active site.

This sequence belongs to the thioester dehydratase family. FabZ subfamily.

Its subcellular location is the cytoplasm. The catalysed reaction is a (3R)-hydroxyacyl-[ACP] = a (2E)-enoyl-[ACP] + H2O. Involved in unsaturated fatty acids biosynthesis. Catalyzes the dehydration of short chain beta-hydroxyacyl-ACPs and long chain saturated and unsaturated beta-hydroxyacyl-ACPs. In Geobacter metallireducens (strain ATCC 53774 / DSM 7210 / GS-15), this protein is 3-hydroxyacyl-[acyl-carrier-protein] dehydratase FabZ.